A 215-amino-acid chain; its full sequence is Small ribosomal subunit protein uS5 (215 aa).

Residues 1 to 11 (MTDSSPQSNPN) are compositionally biased toward polar residues. Positions 1–61 (MTDSSPQSNP…GQDRDSEWQE (61 aa)) are disordered. The segment covering 12–28 (AVPGAADVPAAAQGQQQ) has biased composition (low complexity). Basic and acidic residues predominate over residues 39–61 (RGDRRGDRRGGRRGQDRDSEWQE). In terms of domain architecture, S5 DRBM spans 59–122 (WQERVVQIRR…ADGKKHLVKV (64 aa)).

It belongs to the universal ribosomal protein uS5 family. Part of the 30S ribosomal subunit. Contacts proteins S4 and S8.

Its function is as follows. With S4 and S12 plays an important role in translational accuracy. Located at the back of the 30S subunit body where it stabilizes the conformation of the head with respect to the body. The chain is Small ribosomal subunit protein uS5 from Synechococcus sp. (strain CC9902).